Here is a 406-residue protein sequence, read N- to C-terminus: COP9 signalosome complex subunit 4 (406 aa).

Ala2 bears the N-acetylalanine mark. Lys25 bears the N6-acetyllysine mark. The PCI domain occupies 197 to 366 (YRRKFIEAAQ…GIVHFETREA (170 aa)).

The protein belongs to the CSN4 family. As to quaternary structure, component of the CSN complex, composed of COPS1/GPS1, COPS2, COPS3, COPS4, COPS5, COPS6, COPS7 (COPS7A or COPS7B), COPS8 and COPS9. In the complex, it probably interacts directly with COPS1, COPS2, COPS3, COPS5, COPS6, COPS7 (COPS7A or COPS7B) and COPS8. Interacts with TOR1A; the interaction is direct and associates TOR1A and SNAPIN with the CSN complex. Interacts with STON2; controls STON2 neddylation levels. Interacts with ERCC6.

It is found in the cytoplasm. It localises to the nucleus. Its subcellular location is the cytoplasmic vesicle. The protein localises to the secretory vesicle. The protein resides in the synaptic vesicle. In terms of biological role, component of the COP9 signalosome complex (CSN), a complex involved in various cellular and developmental processes. The CSN complex is an essential regulator of the ubiquitin (Ubl) conjugation pathway by mediating the deneddylation of the cullin subunits of SCF-type E3 ligase complexes, leading to decrease the Ubl ligase activity of SCF-type complexes such as SCF, CSA or DDB2. Also involved in the deneddylation of non-cullin subunits such as STON2. The complex is also involved in phosphorylation of p53/TP53, c-jun/JUN, IkappaBalpha/NFKBIA, ITPK1, IRF8/ICSBP and SNAPIN, possibly via its association with CK2 and PKD kinases. CSN-dependent phosphorylation of TP53 and JUN promotes and protects degradation by the Ubl system, respectively. In Bos taurus (Bovine), this protein is COP9 signalosome complex subunit 4 (COPS4).